We begin with the raw amino-acid sequence, 477 residues long: Ribulose bisphosphate carboxylase large chain (477 aa).

The propeptide occupies 1 to 2; sequence MS. Residue P3 is modified to N-acetylproline. Position 14 is an N6,N6,N6-trimethyllysine (K14). 2 residues coordinate substrate: N123 and T173. K175 functions as the Proton acceptor in the catalytic mechanism. K177 provides a ligand contact to substrate. Residues K201, D203, and E204 each contribute to the Mg(2+) site. K201 carries the N6-carboxylysine modification. The Proton acceptor role is filled by H294. The substrate site is built by R295, H327, and S379.

The protein belongs to the RuBisCO large chain family. Type I subfamily. In terms of assembly, heterohexadecamer of 8 large chains and 8 small chains; disulfide-linked. The disulfide link is formed within the large subunit homodimers. The cofactor is Mg(2+). The disulfide bond which can form in the large chain dimeric partners within the hexadecamer appears to be associated with oxidative stress and protein turnover.

Its subcellular location is the plastid. It is found in the chloroplast. The enzyme catalyses 2 (2R)-3-phosphoglycerate + 2 H(+) = D-ribulose 1,5-bisphosphate + CO2 + H2O. It carries out the reaction D-ribulose 1,5-bisphosphate + O2 = 2-phosphoglycolate + (2R)-3-phosphoglycerate + 2 H(+). Its function is as follows. RuBisCO catalyzes two reactions: the carboxylation of D-ribulose 1,5-bisphosphate, the primary event in carbon dioxide fixation, as well as the oxidative fragmentation of the pentose substrate in the photorespiration process. Both reactions occur simultaneously and in competition at the same active site. This Solanum lycopersicum (Tomato) protein is Ribulose bisphosphate carboxylase large chain (rbcL).